The sequence spans 444 residues: MLQCAPKKNERLRGSCDFCTQSKLRCNKNKPSCRRCTIQQQPCVYSVARRTGRPPKHPRKANDCQEANGQHGEQDPVTSTPGGSCQQQSNHLLDVEGDGANFTLADASTTAQGRETAASSALDNALLVGETFGFSSLLDDPLIQSDDFLSFSLCMPPGEEEGHMASPRALNGSTGPCSPTVLSSIDVPHLPARFGFLESSVESGLHGRTGPHLVEQPDKIVPSSFSEMEKIYDEGLTFSGLDSAINAVTNNGKGEPSASGTMAAHPHSKRQCFCSTSMSKLQMLISHPTLCQKNSRARFDMTLFLEEVVFNIHRDVLQCLVCQSKSLHSLASLCICTDWVIEALRDVAQDLSSGQDNLGGFRAGLCPPKDKFSICVGRFVLDDQLRESCTRSLVKYRLRKLVPIMDTMMKLNYRGAGGALSQAIRTMVEDVRHKIESALGMMEL.

Residues 16-43 (CDFCTQSKLRCNKNKPSCRRCTIQQQPC) constitute a DNA-binding region (zn(2)-C6 fungal-type). A disordered region spans residues 49–87 (RRTGRPPKHPRKANDCQEANGQHGEQDPVTSTPGGSCQQ). Residues 50–59 (RTGRPPKHPR) are compositionally biased toward basic residues. The segment covering 76-87 (PVTSTPGGSCQQ) has biased composition (polar residues).

The protein resides in the nucleus. Its function is as follows. Transcription factor that regulates the expression of the gene clusters that mediate the biosynthesis of the host-selective toxins (HSTs) AK-toxins responsible for Japanese pear black spot disease by the Japanese pear pathotype. AK-toxins are esters of 9,10-epoxy 8-hydroxy 9-methyldecatrienoic acid (EDA). On cellular level, AK-toxins affect plasma membrane of susceptible cells and cause a sudden increase in loss of K(+) after a few minutes of toxin treatment. This Alternaria alternata (Alternaria rot fungus) protein is Transcription activator AKTR-1.